A 297-amino-acid polypeptide reads, in one-letter code: Diaminopimelate epimerase (297 aa).

Substrate-binding residues include Asn13, Gln46, and Asn66. Cys76 (proton donor) is an active-site residue. Substrate is bound by residues 77 to 78 (GN), Asn174, Asn207, and 225 to 226 (ER). Cys234 serves as the catalytic Proton acceptor. 235-236 (GT) is a substrate binding site.

Belongs to the diaminopimelate epimerase family. In terms of assembly, homodimer.

The protein resides in the cytoplasm. The enzyme catalyses (2S,6S)-2,6-diaminopimelate = meso-2,6-diaminopimelate. Its pathway is amino-acid biosynthesis; L-lysine biosynthesis via DAP pathway; DL-2,6-diaminopimelate from LL-2,6-diaminopimelate: step 1/1. Functionally, catalyzes the stereoinversion of LL-2,6-diaminopimelate (L,L-DAP) to meso-diaminopimelate (meso-DAP), a precursor of L-lysine and an essential component of the bacterial peptidoglycan. The chain is Diaminopimelate epimerase from Leptothrix cholodnii (strain ATCC 51168 / LMG 8142 / SP-6) (Leptothrix discophora (strain SP-6)).